The following is an 81-amino-acid chain: Small ribosomal subunit protein bS18 (81 aa).

This sequence belongs to the bacterial ribosomal protein bS18 family. As to quaternary structure, part of the 30S ribosomal subunit. Forms a tight heterodimer with protein bS6.

Functionally, binds as a heterodimer with protein bS6 to the central domain of the 16S rRNA, where it helps stabilize the platform of the 30S subunit. This chain is Small ribosomal subunit protein bS18, found in Lactococcus lactis subsp. cremoris (strain MG1363).